The sequence spans 367 residues: Phosphoribosylaminoimidazole-succinocarboxamide synthase (367 aa).

The protein belongs to the SAICAR synthetase family.

The catalysed reaction is 5-amino-1-(5-phospho-D-ribosyl)imidazole-4-carboxylate + L-aspartate + ATP = (2S)-2-[5-amino-1-(5-phospho-beta-D-ribosyl)imidazole-4-carboxamido]succinate + ADP + phosphate + 2 H(+). Its pathway is purine metabolism; IMP biosynthesis via de novo pathway; 5-amino-1-(5-phospho-D-ribosyl)imidazole-4-carboxamide from 5-amino-1-(5-phospho-D-ribosyl)imidazole-4-carboxylate: step 1/2. The sequence is that of Phosphoribosylaminoimidazole-succinocarboxamide synthase from Shewanella sp. (strain MR-7).